The primary structure comprises 337 residues: Holliday junction branch migration complex subunit RuvB (337 aa).

The interval 1–22 (MEDERITSAEVQSPDEENEELS) is disordered. The interval 1–184 (MEDERITSAE…FGIVEHMNYY (184 aa)) is large ATPase domain (RuvB-L). ATP is bound by residues leucine 23, arginine 24, glycine 65, lysine 68, threonine 69, threonine 70, 131 to 133 (EDF), arginine 174, tyrosine 184, and arginine 221. Position 69 (threonine 69) interacts with Mg(2+). A small ATPAse domain (RuvB-S) region spans residues 185–255 (NEADLANIVR…LVSQSLKLLQ (71 aa)). A head domain (RuvB-H) region spans residues 258-337 (NRGLDRTDKK…LGLIDQYMNK (80 aa)). 2 residues coordinate DNA: arginine 313 and arginine 318.

The protein belongs to the RuvB family. As to quaternary structure, homohexamer. Forms an RuvA(8)-RuvB(12)-Holliday junction (HJ) complex. HJ DNA is sandwiched between 2 RuvA tetramers; dsDNA enters through RuvA and exits via RuvB. An RuvB hexamer assembles on each DNA strand where it exits the tetramer. Each RuvB hexamer is contacted by two RuvA subunits (via domain III) on 2 adjacent RuvB subunits; this complex drives branch migration. In the full resolvosome a probable DNA-RuvA(4)-RuvB(12)-RuvC(2) complex forms which resolves the HJ.

The protein resides in the cytoplasm. It catalyses the reaction ATP + H2O = ADP + phosphate + H(+). The RuvA-RuvB-RuvC complex processes Holliday junction (HJ) DNA during genetic recombination and DNA repair, while the RuvA-RuvB complex plays an important role in the rescue of blocked DNA replication forks via replication fork reversal (RFR). RuvA specifically binds to HJ cruciform DNA, conferring on it an open structure. The RuvB hexamer acts as an ATP-dependent pump, pulling dsDNA into and through the RuvAB complex. RuvB forms 2 homohexamers on either side of HJ DNA bound by 1 or 2 RuvA tetramers; 4 subunits per hexamer contact DNA at a time. Coordinated motions by a converter formed by DNA-disengaged RuvB subunits stimulates ATP hydrolysis and nucleotide exchange. Immobilization of the converter enables RuvB to convert the ATP-contained energy into a lever motion, pulling 2 nucleotides of DNA out of the RuvA tetramer per ATP hydrolyzed, thus driving DNA branch migration. The RuvB motors rotate together with the DNA substrate, which together with the progressing nucleotide cycle form the mechanistic basis for DNA recombination by continuous HJ branch migration. Branch migration allows RuvC to scan DNA until it finds its consensus sequence, where it cleaves and resolves cruciform DNA. This is Holliday junction branch migration complex subunit RuvB from Pediococcus pentosaceus (strain ATCC 25745 / CCUG 21536 / LMG 10740 / 183-1w).